The chain runs to 466 residues: GTPase Der (466 aa).

2 consecutive EngA-type G domains span residues 3–167 (PTLV…PDEP) and 176–350 (PKIA…GAAM). Residues 9-16 (GRSNVGKS), 56-60 (DTGGF), 119-122 (NKTE), 182-189 (GRPNVGKS), 229-233 (DTAGL), and 294-297 (NKWD) each bind GTP. Positions 351–435 (AHLPTPRLTR…PLRIEFRTGR (85 aa)) constitute a KH-like domain. Residues 433-466 (TGRNPYAGKSPAPLTEAEAKRAHRRRRYGRKKYG) are disordered. Positions 453–466 (RAHRRRRYGRKKYG) are enriched in basic residues.

This sequence belongs to the TRAFAC class TrmE-Era-EngA-EngB-Septin-like GTPase superfamily. EngA (Der) GTPase family. In terms of assembly, associates with the 50S ribosomal subunit.

GTPase that plays an essential role in the late steps of ribosome biogenesis. In Nitrosospira multiformis (strain ATCC 25196 / NCIMB 11849 / C 71), this protein is GTPase Der.